Consider the following 132-residue polypeptide: Small ribosomal subunit protein uS8 (132 aa).

The protein belongs to the universal ribosomal protein uS8 family. In terms of assembly, part of the 30S ribosomal subunit. Contacts proteins S5 and S12.

Its function is as follows. One of the primary rRNA binding proteins, it binds directly to 16S rRNA central domain where it helps coordinate assembly of the platform of the 30S subunit. The polypeptide is Small ribosomal subunit protein uS8 (Acetivibrio thermocellus (strain ATCC 27405 / DSM 1237 / JCM 9322 / NBRC 103400 / NCIMB 10682 / NRRL B-4536 / VPI 7372) (Clostridium thermocellum)).